Reading from the N-terminus, the 1904-residue chain is Voltage-dependent calcium channel type A subunit alpha-1 (1904 aa).

Residues 1–45 (MLGGVGGRHMSTRRRGSSPLVRGGAGLTGYAGPGASGNSNDVAAI) are disordered. The span at 23–35 (GGAGLTGYAGPGA) shows a compositional bias: gly residues. Topologically, residues 30–168 (YAGPGASGNS…KHTRFIIEWP (139 aa)) are cytoplasmic. Residues 155 to 447 (NCIRKHTRFI…LVLGVLSGEF (293 aa)) form an I repeat. A helical membrane pass occupies residues 169 to 187 (PFEYAVLLTIIANCVVLAL). Residues 188-205 (EEHLPKQDKTILAQKLEA) lie on the Extracellular side of the membrane. A helical transmembrane segment spans residues 206–225 (TEIYFLGIFCVEASLKILAL). Residues 226–237 (GFVLHRGSYLRN) are Cytoplasmic-facing. The helical transmembrane segment at 238–259 (IWNIMDFFVVVTGFITAFSQGI) threads the bilayer. Residues 260–264 (ELDMD) are Extracellular-facing. A helical membrane pass occupies residues 265–283 (LRTLRAIRVLRPLKLVSGI). Residues 284–302 (PSLQVVLKSIIKAMAPLLQ) are Cytoplasmic-facing. A helical transmembrane segment spans residues 303-322 (IGLLVLFAIVIFAIIGLEFY). The Extracellular portion of the chain corresponds to 323–419 (SGTLHKTCYS…WTNDALGSTY (97 aa)). N-linked (GlcNAc...) asparagine glycosylation is found at asparagine 353 and asparagine 367. A helical transmembrane segment spans residues 420–444 (NWIYFIPLIVLGSFFMLNLVLGVLS). Residues 445–568 (GEFAKEREKV…YWIRKSVKSQ (124 aa)) are Cytoplasmic-facing. Residues 513 to 543 (KKLGKSKSTDTEEEEGDDDQDDGELSSSTKE) form a disordered region. Over residues 523-536 (TEEEEGDDDQDDGE) the composition is skewed to acidic residues. The stretch at 554-797 (EKRFRYWIRK…VFLAIAVDNL (244 aa)) is one II repeat. Residues 569–587 (KFYWFVIVLVFFNTVCVAV) traverse the membrane as a helical segment. The Extracellular portion of the chain corresponds to 588-602 (EHYGQPQWLTDFLYF). A helical transmembrane segment spans residues 603-622 (AEFVFLALFMLEMFIKVYAL). At 623–630 (GPRTYFDS) the chain is on the cytoplasmic side. The helical transmembrane segment at 631–649 (SFNRFDCVVISGSIFEVIW) threads the bilayer. The Extracellular segment spans residues 650–658 (SEVKSGSFG). The helical transmembrane segment at 659–677 (LSVLRALRLLRIFKVTKYW) threads the bilayer. Over 678–696 (KSLRNLVISLLSSMRSIIS) the chain is Cytoplasmic. Residues 697-716 (LLFLLFLFILIFALLGMQLF) traverse the membrane as a helical segment. Topologically, residues 717–769 (GGQFNFDSGTPPTNFNTFPIALLTVFQILTGEDWNEVMYQGIESQGGHKKGMI) are extracellular. A helical membrane pass occupies residues 770 to 794 (YSLYFIVLVLFGNYTLLNVFLAIAV). Residues 795–895 (DNLANAQELS…VRRAAHWVVN (101 aa)) lie on the Cytoplasmic side of the membrane. The tract at residues 827–869 (QSLQNPKDGGAPKVEICPPNGKGGKQSSEEEKKQDEDDDTGPK) is disordered. Residues 890–1177 (AHWVVNLRYF…IITFQEQGEA (288 aa)) form an III repeat. The chain crosses the membrane as a helical span at residues 896–914 (LRYFDFFIMVVISLSSIAL). Residues 915–930 (AAEDPVWEDSPRNEVL) are Extracellular-facing. A helical transmembrane segment spans residues 931-950 (NYFDYAFTGVFTVEMILKII). Residues 951–962 (DLGIILHPGSYL) are Cytoplasmic-facing. Residues 963-981 (REFWNIMDAVVVICAAVSF) form a helical membrane-spanning segment. Residues 982–994 (AFDMTGSSAGQNL) lie on the Extracellular side of the membrane. Asparagine 993 carries N-linked (GlcNAc...) asparagine glycosylation. A helical membrane pass occupies residues 995 to 1013 (STIKSLRVLRVLRPLKTIK). Residues 1014–1032 (RVPKLKAVFDCVVNSLKNV) lie on the Cytoplasmic side of the membrane. Residues 1033 to 1052 (INILIVYILFQFIFAVIAVQ) form a helical membrane-spanning segment. At 1053–1141 (LFNGKFFYCS…EDKGPIQNFR (89 aa)) the chain is on the extracellular side. The helical transmembrane segment at 1142–1166 (IEMSIFYIVYFIVFPFFFVNIFVAL) threads the bilayer. Topologically, residues 1167-1221 (IIITFQEQGEAELQDGEIDKNQKSCIDFTIQARPLERYMPKERNSVKYKIWRIVV) are cytoplasmic. The stretch at 1214–1470 (YKIWRIVVST…DNFDYLTRDS (257 aa)) is one IV repeat. The chain crosses the membrane as a helical span at residues 1222–1250 (STPFEYFIMGLIVLNTVLLMMKFHRQSDA). The Extracellular portion of the chain corresponds to 1251–1255 (YKNTL). The chain crosses the membrane as a helical span at residues 1256–1275 (KYMNMCFTGMFTVECILKIA). At 1276-1283 (AFGVRNFF) the chain is on the cytoplasmic side. A helical membrane pass occupies residues 1284-1302 (KDAWNTFDFITVIGSIVDA). Residues 1303 to 1309 (LVIEFGE) lie on the Extracellular side of the membrane. Residues 1310 to 1328 (NFINVGFLRLFRAARLIKL) traverse the membrane as a helical segment. The Cytoplasmic portion of the chain corresponds to 1329 to 1347 (LRQGYTIRILLWTFVQSFK). The helical transmembrane segment at 1348–1367 (ALPYVCLLIAMLFFIYAIIG) threads the bilayer. Topologically, residues 1368-1431 (MQVFGNIALD…AKAGKQEGGC (64 aa)) are extracellular. The segment at 1430-1471 (GCGSNIAYAYFVSFIFFCSFLMLNLFVAVIMDNFDYLTRDSS) is phenylalkylamine binding. The helical transmembrane segment at 1432-1456 (GSNIAYAYFVSFIFFCSFLMLNLFV) threads the bilayer. Residues 1457–1904 (AVIMDNFDYL…HSDSDEDDWC (448 aa)) lie on the Cytoplasmic side of the membrane. The 36-residue stretch at 1476-1511 (HHLDEFVRIWAEYDPNATGKIHYTEMYDMLKNMDPP) folds into the EF-hand domain. Residues aspartate 1489, asparagine 1491, threonine 1493, lysine 1495, and glutamate 1500 each contribute to the Ca(2+) site. 3 disordered regions span residues 1652 to 1694 (THTG…HEGP), 1710 to 1788 (THHP…HSYP), and 1870 to 1904 (GGRL…DDWC). A compositionally biased stretch (low complexity) spans 1670 to 1681 (RSPSLRHSPGRP). The span at 1682 to 1691 (GYDHHGHYYH) shows a compositional bias: basic and acidic residues. The span at 1710-1725 (THHPHPSQYNHRHRMR) shows a compositional bias: basic residues. The segment covering 1727–1740 (PWSASTSPARTPSP) has biased composition (low complexity). Polar residues predominate over residues 1751–1762 (GTTSLEQRSRSP). A compositionally biased stretch (basic residues) spans 1771–1784 (PHTHQHYHRHHPHQ).

This sequence belongs to the calcium channel alpha-1 subunit (TC 1.A.1.11) family. CACNA1I subfamily. In terms of assembly, interacts with CATSPER1 and CATSPER2, leading to suppress T-type calcium channel activity.

The protein localises to the membrane. Voltage-sensitive calcium channels (VSCC) mediate the entry of calcium ions into excitable cells and are also involved in a variety of calcium-dependent processes, including muscle contraction, neurotransmitter release, gene expression, cell motility, cell division and cell death. This is Voltage-dependent calcium channel type A subunit alpha-1 (CAC) from Apis mellifera (Honeybee).